A 396-amino-acid chain; its full sequence is Elongation factor Tu 2 (396 aa).

The 197-residue stretch at 10 to 206 (KPHVNIGTIG…AVDSYIPTPQ (197 aa)) folds into the tr-type G domain. Residues 19-26 (GHVDHGKT) are G1. GTP is bound at residue 19 to 26 (GHVDHGKT). Residue threonine 26 participates in Mg(2+) binding. The tract at residues 60–64 (GITIS) is G2. A G3 region spans residues 81–84 (DCPG). Residues 81-85 (DCPGH) and 136-139 (NKVD) each bind GTP. The G4 stretch occupies residues 136–139 (NKVD). The interval 174-176 (SAL) is G5.

The protein belongs to the TRAFAC class translation factor GTPase superfamily. Classic translation factor GTPase family. EF-Tu/EF-1A subfamily. Monomer.

The protein localises to the cytoplasm. The catalysed reaction is GTP + H2O = GDP + phosphate + H(+). GTP hydrolase that promotes the GTP-dependent binding of aminoacyl-tRNA to the A-site of ribosomes during protein biosynthesis. The polypeptide is Elongation factor Tu 2 (Myxococcus xanthus (strain DK1622)).